A 315-amino-acid chain; its full sequence is Ribosomal RNA small subunit methyltransferase H (315 aa).

S-adenosyl-L-methionine-binding positions include 33-35 (GGH), Asp-52, Phe-84, Asp-106, and Gln-113.

Belongs to the methyltransferase superfamily. RsmH family.

It localises to the cytoplasm. It carries out the reaction cytidine(1402) in 16S rRNA + S-adenosyl-L-methionine = N(4)-methylcytidine(1402) in 16S rRNA + S-adenosyl-L-homocysteine + H(+). Specifically methylates the N4 position of cytidine in position 1402 (C1402) of 16S rRNA. The polypeptide is Ribosomal RNA small subunit methyltransferase H (Lactobacillus acidophilus (strain ATCC 700396 / NCK56 / N2 / NCFM)).